Consider the following 620-residue polypeptide: NADPH-dependent diflavin oxidoreductase 1 (620 aa).

The 163-residue stretch at 6–168 (IAILYGSETG…VYSEFEKRVL (163 aa)) folds into the Flavodoxin-like domain. FMN is bound by residues 12–17 (SETGTA), 59–62 (STTG), and 106–115 (LGDSSYSKFN). The FAD-binding FR-type domain maps to 222–475 (SSVKYGTVVT…LLPAGKQDRP (254 aa)). FAD is bound by residues R380, 410–413 (RFFS), and 442–445 (GLCT). An NADP(+)-binding site is contributed by 535–536 (SR). W620 contributes to the FAD binding site.

Belongs to the NADPH-dependent diflavin oxidoreductase NDOR1 family. This sequence in the N-terminal section; belongs to the flavodoxin family. It in the C-terminal section; belongs to the flavoprotein pyridine nucleotide cytochrome reductase family. In terms of assembly, interacts with DRE2; as part of the cytosolic iron-sulfur (Fe-S) protein assembly (CIA) machinery. The cofactor is FAD. FMN is required as a cofactor.

It is found in the cytoplasm. The protein resides in the mitochondrion. It carries out the reaction 2 oxidized [2Fe-2S]-[protein] + NADPH = 2 reduced [2Fe-2S]-[protein] + NADP(+) + H(+). NADPH-dependent reductase which is a central component of the cytosolic iron-sulfur (Fe-S) protein assembly (CIA) machinery. Transfers electrons from NADPH via its FAD and FMN prosthetic groups to the [2Fe-2S] cluster of DRE2, another key component of the CIA machinery. In turn, this reduced cluster provides electrons for assembly of cytosolic iron-sulfur cluster proteins. Positively controls H(2)O(2)-induced cell death. This Eremothecium gossypii (strain ATCC 10895 / CBS 109.51 / FGSC 9923 / NRRL Y-1056) (Yeast) protein is NADPH-dependent diflavin oxidoreductase 1.